The sequence spans 406 residues: Argininosuccinate synthase (406 aa).

Residues 11–19 (AYSGGLDTS) and Ala38 each bind ATP. L-citrulline contacts are provided by Tyr91 and Ser96. An ATP-binding site is contributed by Gly121. 3 residues coordinate L-aspartate: Thr123, Asn127, and Asp128. Asn127 provides a ligand contact to L-citrulline. Arg131, Ser181, Ser190, Glu266, and Tyr278 together coordinate L-citrulline.

Belongs to the argininosuccinate synthase family. Type 1 subfamily. As to quaternary structure, homotetramer.

Its subcellular location is the cytoplasm. It carries out the reaction L-citrulline + L-aspartate + ATP = 2-(N(omega)-L-arginino)succinate + AMP + diphosphate + H(+). It functions in the pathway amino-acid biosynthesis; L-arginine biosynthesis; L-arginine from L-ornithine and carbamoyl phosphate: step 2/3. In Campylobacter jejuni subsp. jejuni serotype O:2 (strain ATCC 700819 / NCTC 11168), this protein is Argininosuccinate synthase.